The chain runs to 303 residues: Protoheme IX farnesyltransferase 1 (303 aa).

9 helical membrane passes run 18 to 38 (PGIIMGNLISVAGGFLLAAQG), 42 to 62 (LTLMFATMIGLSLVVASGCAV), 91 to 111 (AVLSFGIGLGIIGFAMLAIFT), 114 to 134 (LAVLFAAIGYVVYVGVYSLYM), 139 to 159 (VYGTLVGSFSGAVPPVVGYCA), 169 to 189 (VILLLMFSLWQMPHSYAIAIF), 213 to 233 (LHIVLYIAVFAVVSALLPLAG), 235 to 255 (TGIAFMAVTFATSLWWLAMAL), and 274 to 294 (FSIITITALSVTMALDFQVVA).

This sequence belongs to the UbiA prenyltransferase family. Protoheme IX farnesyltransferase subfamily.

It is found in the cell inner membrane. The catalysed reaction is heme b + (2E,6E)-farnesyl diphosphate + H2O = Fe(II)-heme o + diphosphate. It participates in porphyrin-containing compound metabolism; heme O biosynthesis; heme O from protoheme: step 1/1. Converts heme B (protoheme IX) to heme O by substitution of the vinyl group on carbon 2 of heme B porphyrin ring with a hydroxyethyl farnesyl side group. The sequence is that of Protoheme IX farnesyltransferase 1 from Shewanella frigidimarina (strain NCIMB 400).